Consider the following 153-residue polypeptide: MESWLFLLGILAIAIVGKNKSLIIGVSAVMVLKLIPQTQNFLKLLQTQGINWGVTVISAAIMVPIATGEIGFKELLNVIKSPAGWIAIGCGVLVAVLSAKGVGLLAMSPEMTVALVFGTIIGVVFLKGIAAGPVIASGLTYVILTVFNLVPGH.

The next 4 membrane-spanning stretches (helical) occupy residues Trp4–Ile24, Trp52–Phe72, Trp85–Leu105, and Leu115–Ile135.

Belongs to the UPF0756 family.

It localises to the cell membrane. The polypeptide is UPF0756 membrane protein LSEI_1366 (Lacticaseibacillus paracasei (strain ATCC 334 / BCRC 17002 / CCUG 31169 / CIP 107868 / KCTC 3260 / NRRL B-441) (Lactobacillus paracasei)).